An 843-amino-acid polypeptide reads, in one-letter code: Protein translocase subunit SecA 1 (843 aa).

Residues glutamine 91, 109-113, and aspartate 498 each bind ATP; that span reads GEGKT. Over residues 799-813 the composition is skewed to basic and acidic residues; sequence EAKHVSAEDGKEKVK. A disordered region spans residues 799–826; the sequence is EAKHVSAEDGKEKVKPKPIVKGDQVGRN. Positions 829, 831, 840, and 841 each coordinate Zn(2+).

Belongs to the SecA family. Monomer and homodimer. Part of the essential Sec protein translocation apparatus which comprises SecA, SecYEG and auxiliary proteins SecDF. Other proteins may also be involved. Zn(2+) serves as cofactor.

The protein resides in the cell membrane. Its subcellular location is the cytoplasm. It catalyses the reaction ATP + H2O + cellular proteinSide 1 = ADP + phosphate + cellular proteinSide 2.. Functionally, part of the Sec protein translocase complex. Interacts with the SecYEG preprotein conducting channel. Has a central role in coupling the hydrolysis of ATP to the transfer of proteins into and across the cell membrane, serving as an ATP-driven molecular motor driving the stepwise translocation of polypeptide chains across the membrane. The sequence is that of Protein translocase subunit SecA 1 from Staphylococcus aureus (strain MRSA252).